A 274-amino-acid chain; its full sequence is 2,3,4,5-tetrahydropyridine-2,6-dicarboxylate N-succinyltransferase (274 aa).

It belongs to the transferase hexapeptide repeat family.

Its subcellular location is the cytoplasm. The enzyme catalyses (S)-2,3,4,5-tetrahydrodipicolinate + succinyl-CoA + H2O = (S)-2-succinylamino-6-oxoheptanedioate + CoA. It functions in the pathway amino-acid biosynthesis; L-lysine biosynthesis via DAP pathway; LL-2,6-diaminopimelate from (S)-tetrahydrodipicolinate (succinylase route): step 1/3. The chain is 2,3,4,5-tetrahydropyridine-2,6-dicarboxylate N-succinyltransferase from Yersinia pseudotuberculosis serotype IB (strain PB1/+).